The chain runs to 92 residues: Large ribosomal subunit protein eL31 (92 aa).

It belongs to the eukaryotic ribosomal protein eL31 family.

This is Large ribosomal subunit protein eL31 from Halobacterium salinarum (strain ATCC 29341 / DSM 671 / R1).